Reading from the N-terminus, the 370-residue chain is 3-isopropylmalate dehydrogenase (370 aa).

77 to 90 contacts NAD(+); the sequence is GPKWDSVPYEVRPE. Residues Arg-97, Arg-107, Arg-135, and Asp-226 each contribute to the substrate site. Residues Asp-226, Asp-250, and Asp-254 each contribute to the Mg(2+) site. Residue 290 to 302 coordinates NAD(+); the sequence is GSAPDIAGKGIAN.

It belongs to the isocitrate and isopropylmalate dehydrogenases family. LeuB type 1 subfamily. In terms of assembly, homodimer. It depends on Mg(2+) as a cofactor. The cofactor is Mn(2+).

It is found in the cytoplasm. It catalyses the reaction (2R,3S)-3-isopropylmalate + NAD(+) = 4-methyl-2-oxopentanoate + CO2 + NADH. The protein operates within amino-acid biosynthesis; L-leucine biosynthesis; L-leucine from 3-methyl-2-oxobutanoate: step 3/4. Catalyzes the oxidation of 3-carboxy-2-hydroxy-4-methylpentanoate (3-isopropylmalate) to 3-carboxy-4-methyl-2-oxopentanoate. The product decarboxylates to 4-methyl-2 oxopentanoate. This Brucella melitensis biotype 1 (strain ATCC 23456 / CCUG 17765 / NCTC 10094 / 16M) protein is 3-isopropylmalate dehydrogenase.